Reading from the N-terminus, the 200-residue chain is Large ribosomal subunit protein uL4 (200 aa).

Positions 38–72 (GRQGTKQQKTRSDVAGGGKRPWRQKGTGRARAGTT) are disordered.

Belongs to the universal ribosomal protein uL4 family. Part of the 50S ribosomal subunit.

Functionally, one of the primary rRNA binding proteins, this protein initially binds near the 5'-end of the 23S rRNA. It is important during the early stages of 50S assembly. It makes multiple contacts with different domains of the 23S rRNA in the assembled 50S subunit and ribosome. In terms of biological role, forms part of the polypeptide exit tunnel. The protein is Large ribosomal subunit protein uL4 of Pseudomonas entomophila (strain L48).